Here is a 136-residue protein sequence, read N- to C-terminus: uncharacterized protein (136 aa).

The next 4 membrane-spanning stretches (helical) occupy residues 10-32 (SAGI…FIWI), 44-66 (LRCG…ILHF), 70-89 (VLLL…KTLL), and 102-124 (IAGV…WLLF).

The protein resides in the cell membrane. This is an uncharacterized protein from Archaeoglobus fulgidus (strain ATCC 49558 / DSM 4304 / JCM 9628 / NBRC 100126 / VC-16).